Here is a 482-residue protein sequence, read N- to C-terminus: UDP-N-acetylmuramate--L-alanine ligase (482 aa).

An ATP-binding site is contributed by 123-129; that stretch reads GTHGKTT.

Belongs to the MurCDEF family.

The protein resides in the cytoplasm. It carries out the reaction UDP-N-acetyl-alpha-D-muramate + L-alanine + ATP = UDP-N-acetyl-alpha-D-muramoyl-L-alanine + ADP + phosphate + H(+). The protein operates within cell wall biogenesis; peptidoglycan biosynthesis. Cell wall formation. The chain is UDP-N-acetylmuramate--L-alanine ligase from Pseudomonas entomophila (strain L48).